The sequence spans 481 residues: 3-isopropylmalate dehydratase large subunit (481 aa).

Positions 363, 423, and 426 each coordinate [4Fe-4S] cluster. The segment at 434–465 (LRPGQRAASTSNRNFEGRQGRGGRTHLVSPPV) is disordered.

It belongs to the aconitase/IPM isomerase family. LeuC type 1 subfamily. In terms of assembly, heterodimer of LeuC and LeuD. It depends on [4Fe-4S] cluster as a cofactor.

The catalysed reaction is (2R,3S)-3-isopropylmalate = (2S)-2-isopropylmalate. The protein operates within amino-acid biosynthesis; L-leucine biosynthesis; L-leucine from 3-methyl-2-oxobutanoate: step 2/4. Functionally, catalyzes the isomerization between 2-isopropylmalate and 3-isopropylmalate, via the formation of 2-isopropylmaleate. The protein is 3-isopropylmalate dehydratase large subunit of Salinispora tropica (strain ATCC BAA-916 / DSM 44818 / JCM 13857 / NBRC 105044 / CNB-440).